The chain runs to 111 residues: Cytochrome c (111 aa).

A1 is subject to N-acetylalanine. Positions 22, 25, and 26 each coordinate heme c. At K80 the chain carries N6,N6,N6-trimethyllysine. M88 lines the heme c pocket. Position 94 is an N6,N6,N6-trimethyllysine (K94).

Belongs to the cytochrome c family. Post-translationally, binds 1 heme c group covalently per subunit.

Its subcellular location is the mitochondrion intermembrane space. Its function is as follows. Electron carrier protein. The oxidized form of the cytochrome c heme group can accept an electron from the heme group of the cytochrome c1 subunit of cytochrome reductase. Cytochrome c then transfers this electron to the cytochrome oxidase complex, the final protein carrier in the mitochondrial electron-transport chain. The chain is Cytochrome c from Gossypium barbadense (Sea Island cotton).